The primary structure comprises 189 residues: Interferon alpha-D (189 aa).

The first 23 residues, 1 to 23 (MAPAWSLLLALLLLSCNAICSLG), serve as a signal peptide directing secretion. Cystine bridges form between Cys-24–Cys-122 and Cys-52–Cys-162.

Belongs to the alpha/beta interferon family.

The protein resides in the secreted. Functionally, produced by macrophages, IFN-alpha have antiviral activities. Interferon stimulates the production of two enzymes: a protein kinase and an oligoadenylate synthetase. The protein is Interferon alpha-D (IFNAD) of Bos taurus (Bovine).